The sequence spans 188 residues: ATP synthase subunit b (188 aa).

A helical membrane pass occupies residues 24-44 (LPASYDIVWSLVVFIIVLILF).

It belongs to the ATPase B chain family. As to quaternary structure, F-type ATPases have 2 components, F(1) - the catalytic core - and F(0) - the membrane proton channel. F(1) has five subunits: alpha(3), beta(3), gamma(1), delta(1), epsilon(1). F(0) has three main subunits: a(1), b(2) and c(10-14). The alpha and beta chains form an alternating ring which encloses part of the gamma chain. F(1) is attached to F(0) by a central stalk formed by the gamma and epsilon chains, while a peripheral stalk is formed by the delta and b chains.

Its subcellular location is the cell membrane. Functionally, f(1)F(0) ATP synthase produces ATP from ADP in the presence of a proton or sodium gradient. F-type ATPases consist of two structural domains, F(1) containing the extramembraneous catalytic core and F(0) containing the membrane proton channel, linked together by a central stalk and a peripheral stalk. During catalysis, ATP synthesis in the catalytic domain of F(1) is coupled via a rotary mechanism of the central stalk subunits to proton translocation. Component of the F(0) channel, it forms part of the peripheral stalk, linking F(1) to F(0). The protein is ATP synthase subunit b of Corynebacterium diphtheriae (strain ATCC 700971 / NCTC 13129 / Biotype gravis).